The following is a 118-amino-acid chain: V-type proton ATPase subunit G 2 (118 aa).

Positions 26–90 are disordered; the sequence is RKRKARRLKQ…VQGMQSSQQR (65 aa). Residues 35–55 show a composition bias toward basic and acidic residues; sequence QAKEEAQMEVEQYRREREQEF. Composition is skewed to polar residues over residues 56 to 69 and 78 to 89; these read QSKQ…QGNL and RRQVQGMQSSQQ.

Belongs to the V-ATPase G subunit family. V-ATPase is a heteromultimeric enzyme made up of two complexes: the ATP-hydrolytic V1 complex and the proton translocation V0 complex. The V1 complex consists of three catalytic AB heterodimers that form a heterohexamer, three peripheral stalks each consisting of EG heterodimers, one central rotor including subunits D and F, and the regulatory subunits C and H. The proton translocation complex V0 consists of the proton transport subunit a, a ring of proteolipid subunits c9c'', rotary subunit d, subunits e and f, and the accessory subunits ATP6AP1/Ac45 and ATP6AP2/PRR.

It is found in the melanosome. It localises to the cytoplasmic vesicle. The protein localises to the clathrin-coated vesicle membrane. Its function is as follows. Subunit of the V1 complex of vacuolar(H+)-ATPase (V-ATPase), a multisubunit enzyme composed of a peripheral complex (V1) that hydrolyzes ATP and a membrane integral complex (V0) that translocates protons. V-ATPase is responsible for acidifying and maintaining the pH of intracellular compartments and in some cell types, is targeted to the plasma membrane, where it is responsible for acidifying the extracellular environment. In Sus scrofa (Pig), this protein is V-type proton ATPase subunit G 2 (ATP6V1G2).